Here is a 230-residue protein sequence, read N- to C-terminus: Eukaryotic translation initiation factor 4E-1 (230 aa).

Residues 1–53 (MVVEDSQKSTITDEQNPSRVDNDDDDLEDGEILEDADDAASAASKPPSAFLRN) form a disordered region. A compositionally biased stretch (polar residues) spans 8 to 19 (KSTITDEQNPSR). The segment covering 22 to 38 (NDDDDLEDGEILEDADD) has biased composition (acidic residues). The span at 39–49 (AASAASKPPSA) shows a compositional bias: low complexity. EIF4G-binding regions lie at residues 55–58 (HPLE) and 65–101 (FDNP…NNIH). MRNA-binding positions include 73–78 (KQAAWG), Lys105, and 123–124 (WE). The cysteines at positions 128 and 166 are disulfide-linked. Residues 149 to 158 (YTLLAMIGEQ) form an EIF4G-binding region. MRNA contacts are provided by residues 173 to 178 (RNRQDK) and 218 to 222 (KKHER).

Belongs to the eukaryotic initiation factor 4E family. In terms of assembly, EIF4F is a multi-subunit complex, the composition of which varies with external and internal environmental conditions. It is composed of at least EIF4A, EIF4E and EIF4G. EIF4E is also known to interact with other partners. In higher plants two isoforms of EIF4F have been identified, named isoform EIF4F and isoform EIF(iso)4F. Isoform EIF4F has subunits p220 and p26, whereas isoform EIF(iso)4F has subunits p82 and p28. (Microbial infection) Interacts with potyvirus viral genome-linked protein (VPg); this interaction is possible in susceptible hosts but impaired in resistant plants. According to the redox status, the Cys-128-Cys-166 disulfide bridge may have a role in regulating protein function by affecting its ability to bind capped mRNA.

It is found in the nucleus. The protein localises to the cytoplasm. In terms of biological role, component of the protein complex eIF4F, which is involved in the recognition of the mRNA cap, ATP-dependent unwinding of 5'-terminal secondary structure and recruitment of mRNA to the ribosome. Recognizes and binds the 7-methylguanosine-containing mRNA cap during an early step in the initiation of protein synthesis and facilitates ribosome binding by inducing the unwinding of the mRNAs secondary structures. Key component of recessive resistance to potyviruses. (Microbial infection) Susceptibility host factor required for viral infection by recruiting viral RNAs to the host ribosomal complex via an interaction with viral genome-linked protein (VPg). In Phaseolus vulgaris (Kidney bean), this protein is Eukaryotic translation initiation factor 4E-1.